The sequence spans 668 residues: METSSFENAPPAAINDAQDNNINTETNDQETNQQSIETRDAIDKENGVQTETGENSAKNAEQNVSSTNLNNAPTNGALDDDVIPNAIVIKNIPFAIKKEQLLDIIEEMDLPLPYAFNYHFDNGIFRGLAFANFTTPEETTQVITSLNGKEISGRKLKVEYKKMLPQAERERIEREKREKRGQLEEQHRSSSNLSLDSLSKMSGSGNNNTSNNQLFSTLMNGINANSMMNSPMNNTINNNSSNNNNSGNIILNQPSLSAQHTSSSLYQTNVNNQAQMSTERFYAPLPSTSTLPLPPQQLDFNDPDTLEIYSQLLLFKDREKYYYELAYPMGISASHKRIINVLCSYLGLVEVYDPRFIIIRRKILDHANLQSHLQQQGQMTSAHPLQPNSTGGSMNRSQSYTSLLQAHAAAAANSISNQAVNNSSNSNTINSNNGNGNNVIINNNSASSTPKISSQGQFSMQPTLTSPKMNIHHSSQYNSADQPQQPQPQTQQNVQSAAQQQQSFLRQQATLTPSSRIPSGYSANHYQINSVNPLLRNSQISPPNSQIPINSQTLSQAQPPAQSQTQQRVPVAYQNASLSSQQLYNLNGPSSANSQSQLLPQHTNGSVHSNFSYQSYHDESMLSAHNLNSADLIYKSLSHSGLDDGLEQGLNRSLSGLDLQNQNKKNLW.

Residues 1–77 (METSSFENAP…NLNNAPTNGA (77 aa)) form a disordered region. The span at 8–23 (NAPPAAINDAQDNNIN) shows a compositional bias: low complexity. Residues 24-36 (TETNDQETNQQSI) are compositionally biased toward polar residues. The segment covering 37 to 46 (ETRDAIDKEN) has biased composition (basic and acidic residues). Polar residues predominate over residues 47–74 (GVQTETGENSAKNAEQNVSSTNLNNAPT). Serine 56 is modified (phosphoserine). In terms of domain architecture, RRM spans 85–163 (NAIVIKNIPF…RKLKVEYKKM (79 aa)). Basic and acidic residues predominate over residues 168–188 (ERERIEREKREKRGQLEEQHR). A disordered region spans residues 168 to 214 (ERERIEREKREKRGQLEEQHRSSSNLSLDSLSKMSGSGNNNTSNNQL). Residues serine 189, serine 191, serine 194, and serine 197 each carry the phosphoserine modification. Residues 189 to 212 (SSSNLSLDSLSKMSGSGNNNTSNN) show a composition bias toward low complexity. Threonine 305 is modified (phosphothreonine). Disordered regions lie at residues 374 to 398 (QQQG…NRSQ) and 420 to 570 (VNNS…QRVP). Phosphoserine is present on serine 393. Low complexity predominate over residues 420–449 (VNNSSNSNTINSNNGNGNNVIINNNSASST). A compositionally biased stretch (polar residues) spans 450-478 (PKISSQGQFSMQPTLTSPKMNIHHSSQYN). Position 466 is a phosphoserine (serine 466). The span at 479–508 (SADQPQQPQPQTQQNVQSAAQQQQSFLRQQ) shows a compositional bias: low complexity. The segment covering 509–551 (ATLTPSSRIPSGYSANHYQINSVNPLLRNSQISPPNSQIPINS) has biased composition (polar residues). Residue serine 541 is modified to Phosphoserine. Residues 552–567 (QTLSQAQPPAQSQTQQ) are compositionally biased toward low complexity. 5 positions are modified to phosphoserine: serine 636, serine 638, serine 640, serine 653, and serine 655.

As to quaternary structure, interacts with RAD53. Post-translationally, hyperphosphorylated in response to DNA damage by MEC1.

The protein localises to the cytoplasm. Functionally, involved in normal G2/M phase transition of the mitotic cell cycle. In association with RAD53, also involved in checkpoint control in response to DNA damage. The chain is RNA-binding protein PIN4 (PIN4) from Saccharomyces cerevisiae (strain ATCC 204508 / S288c) (Baker's yeast).